Here is a 316-residue protein sequence, read N- to C-terminus: 4-amino-5-hydroxymethyl-2-methylpyrimidine phosphate synthase (316 aa).

Position 66 is an N6-(pyridoxal phosphate)lysine (Lys-66). His-70 is a catalytic residue. 118–121 (GEFG) contacts pyridoxal 5'-phosphate. The CCCFC; essential for catalytic activity, may be the site of iron coordination motif lies at 191–195 (CCCFC).

It belongs to the NMT1/THI5 family. As to quaternary structure, homodimer. Fe cation serves as cofactor.

It catalyses the reaction N(6)-(pyridoxal phosphate)-L-lysyl-[4-amino-5-hydroxymethyl-2-methylpyrimidine phosphate synthase] + L-histidyl-[4-amino-5-hydroxymethyl-2-methylpyrimidine phosphate synthase] + 2 Fe(3+) + 4 H2O = L-lysyl-[4-amino-5-hydroxymethyl-2-methylpyrimidine phosphate synthase] + (2S)-2-amino-5-hydroxy-4-oxopentanoyl-[4-amino-5-hydroxymethyl-2-methylpyrimidine phosphate synthase] + 4-amino-2-methyl-5-(phosphooxymethyl)pyrimidine + 3-oxopropanoate + 2 Fe(2+) + 2 H(+). It participates in cofactor biosynthesis; thiamine diphosphate biosynthesis. Responsible for the formation of the pyrimidine heterocycle in the thiamine biosynthesis pathway. Catalyzes the formation of hydroxymethylpyrimidine phosphate (HMP-P) from histidine and pyridoxal phosphate (PLP). The protein uses PLP and the active site histidine to form HMP-P, generating an inactive enzyme. The enzyme can only undergo a single turnover, which suggests it is a suicide enzyme. The protein is 4-amino-5-hydroxymethyl-2-methylpyrimidine phosphate synthase of Legionella pneumophila subsp. pneumophila (strain Philadelphia 1 / ATCC 33152 / DSM 7513).